We begin with the raw amino-acid sequence, 74 residues long: Conotoxin Vc6.8 (74 aa).

The first 19 residues, 1-19 (MEKLTILLLVAAVLMSTQA), serve as a signal peptide directing secretion. Residues 20-34 (LMQEQRQKAKINLFS) constitute a propeptide that is removed on maturation. Intrachain disulfides connect Cys-49/Cys-62, Cys-55/Cys-66, and Cys-61/Cys-70.

The protein belongs to the conotoxin O2 superfamily. Expressed by the venom duct.

The protein resides in the secreted. Functionally, inhibits voltage-gated ion channels. The sequence is that of Conotoxin Vc6.8 from Conus victoriae (Queen Victoria cone).